Here is an 86-residue protein sequence, read N- to C-terminus: UPF0297 protein LSL_1110 (86 aa).

Belongs to the UPF0297 family.

The chain is UPF0297 protein LSL_1110 from Ligilactobacillus salivarius (strain UCC118) (Lactobacillus salivarius).